An 891-amino-acid chain; its full sequence is DNA mismatch repair protein MutS (891 aa).

Residue 646–653 (GPNMAGKS) participates in ATP binding.

The protein belongs to the DNA mismatch repair MutS family.

In terms of biological role, this protein is involved in the repair of mismatches in DNA. It is possible that it carries out the mismatch recognition step. This protein has a weak ATPase activity. The chain is DNA mismatch repair protein MutS from Rickettsia massiliae (strain Mtu5).